We begin with the raw amino-acid sequence, 337 residues long: Cytoskeleton protein RodZ (337 aa).

Residues 1-111 lie on the Cytoplasmic side of the membrane; that stretch reads MNTEATHDQN…LGKRRKKRDG (111 aa). The HTH cro/C1-type domain maps to 19–71; sequence LRNAREQLGLSQQAVAERLCLKVSTVRDIEEDKAPADLASTFLRGYIRSYARL. The H-T-H motif DNA-binding region spans 30-49; that stretch reads QQAVAERLCLKVSTVRDIEE. Residues 112–132 form a helical; Signal-anchor for type II membrane protein membrane-spanning segment; that stretch reads WLMTFTWLVLFVVIGLSGAWW. Residues 133 to 337 are Periplasmic-facing; that stretch reads WQDHKAQQEE…TLNAEQSPAQ (205 aa). Over residues 145–167 the composition is skewed to polar residues; the sequence is TMADQSSAELSSNSEQGQSVPLN. The interval 145–218 is disordered; sequence TMADQSSAEL…AVVSPSQANV (74 aa). Positions 168-207 are enriched in low complexity; the sequence is TSTTTDPATTSTPPASVDTTATNTQTPAVTAPAPAVDPQQ. Residues 208–218 are compositionally biased toward polar residues; that stretch reads NAVVSPSQANV.

It belongs to the RodZ family.

Its subcellular location is the cell inner membrane. Its function is as follows. Cytoskeletal protein that is involved in cell-shape control through regulation of the length of the long axis. The protein is Cytoskeleton protein RodZ of Shigella flexneri serotype 5b (strain 8401).